Consider the following 387-residue polypeptide: 3-ketoacyl-CoA thiolase (387 aa).

Catalysis depends on cysteine 91, which acts as the Acyl-thioester intermediate. Catalysis depends on proton acceptor residues histidine 343 and cysteine 373.

This sequence belongs to the thiolase-like superfamily. Thiolase family. Heterotetramer of two alpha chains (FadB) and two beta chains (FadA).

The protein resides in the cytoplasm. The enzyme catalyses an acyl-CoA + acetyl-CoA = a 3-oxoacyl-CoA + CoA. The protein operates within lipid metabolism; fatty acid beta-oxidation. In terms of biological role, catalyzes the final step of fatty acid oxidation in which acetyl-CoA is released and the CoA ester of a fatty acid two carbons shorter is formed. The protein is 3-ketoacyl-CoA thiolase of Serratia proteamaculans (strain 568).